Reading from the N-terminus, the 65-residue chain is Large ribosomal subunit protein bL35 (65 aa).

The disordered stretch occupies residues 1-51 (MPKIKTNRGAAKRFRKSASGRVKRGNAFTSHILTHKTRKNKRNLRGTSMVS). Composition is skewed to basic residues over residues 10–24 (AAKR…RVKR) and 33–44 (LTHKTRKNKRNL).

Belongs to the bacterial ribosomal protein bL35 family.

The sequence is that of Large ribosomal subunit protein bL35 from Pelobacter propionicus (strain DSM 2379 / NBRC 103807 / OttBd1).